Reading from the N-terminus, the 548-residue chain is MNGAQWVVHALRAQGVNTVFGYPGGAIMPVYDALYDGGVEHLLCRHEQGAAMAAIGYARATGKTGVCIATSGPGATNLITGLADALLDSIPVVAITGQVSAPFIGTDAFQEVDVLGLSLACTKHSFLVQSLEELPRIMAEAFDVACSGRPGPVLVDIPKDIQLASGDLEPWFTTVENEVTFPHAEVEQARQMLAKAQKPMLYVGGGVGMAQAVPALREFLAATKMPATCTLKGLGAVEADYPYYLGMLGMHGTKAANFAVQECDLLIAVGARFDDRVTGKLNTFAPHASVIHMDIDPAEMNKLRQAHVALQGDLNALLPALQQPLNQYDWQQHCAQLRDEHSWRYDHPGDAIYAPLLLKQLSDRKPADCVVTTDVGQHQMWAAQHIAHTRPENFITSSGLGTMGFGLPAAVGAQVARPNDTVVCISGDGSFMMNVQELGTVKRKQLPLKIVLLDNQRLGMVRQWQQLFFQERYSETTLTDNPDFLMLASAFGIHGQHITRKDQVEAALDTMLNSDGPYLLHVSIDELENVWPLVPPGASNSEMLEKLS.

Glu-47 contacts thiamine diphosphate. FAD is bound by residues Arg-149, 251–272, and 294–313; these read HGTK…VGAR and DIDP…LQGD. Positions 377–457 are thiamine pyrophosphate binding; that stretch reads QHQMWAAQHI…LKIVLLDNQR (81 aa). The Mg(2+) site is built by Asp-428 and Asn-455.

Belongs to the TPP enzyme family. In terms of assembly, tetramer of two large (IlvG) and two small (IlvM) chains. It depends on FAD as a cofactor. Mg(2+) is required as a cofactor. The cofactor is thiamine diphosphate.

It catalyses the reaction 2 pyruvate + H(+) = (2S)-2-acetolactate + CO2. The protein operates within amino-acid biosynthesis; L-isoleucine biosynthesis; L-isoleucine from 2-oxobutanoate: step 1/4. It participates in amino-acid biosynthesis; L-valine biosynthesis; L-valine from pyruvate: step 1/4. With respect to regulation, inhibited by the herbicides chlorimuron ethyl, chlorsulfuron and imazapyr. In terms of biological role, catalyzes the first step in the biosynthesis of branched-chain amino acids. The chain is Acetolactate synthase isozyme 2 large subunit (ilvG) from Escherichia coli (strain K12).